The chain runs to 372 residues: Enoyl-[acyl-carrier-protein] reductase, mitochondrial (372 aa).

A mitochondrion-targeting transit peptide spans 1–18 (MSFFKTAVRRFSSTSITR). The active-site Proton donor is Tyr-72. NADP(+) is bound by residues Asn-157, 183–186 (NSMV), 206–208 (RNR), 279–282 (FGGM), 304–306 (FWV), and Lys-365.

It belongs to the zinc-containing alcohol dehydrogenase family. Quinone oxidoreductase subfamily. In terms of assembly, homodimer.

The protein localises to the mitochondrion matrix. The enzyme catalyses a 2,3-saturated acyl-[ACP] + NADP(+) = a (2E)-enoyl-[ACP] + NADPH + H(+). In terms of biological role, catalyzes the NADPH-dependent reduction of trans-2-enoyl thioesters in mitochondrial fatty acid synthesis (fatty acid synthesis type II). Fatty acid chain elongation in mitochondria uses acyl carrier protein (ACP) as an acyl group carrier, but the enzyme accepts both ACP and CoA thioesters as substrates in vitro. Required for respiration and the maintenance of the mitochondrial compartment. The polypeptide is Enoyl-[acyl-carrier-protein] reductase, mitochondrial (etr1) (Schizosaccharomyces pombe (strain 972 / ATCC 24843) (Fission yeast)).